The primary structure comprises 184 residues: MFSSQHRLLYQPSGPDLSKNLDPERGRRLGIDVGSVRIGVAFSDPDGILATPVETVRRYRSAKHLRRLAELVVELQVVEVVVGLPWTLTDRTGSSAKDAIDTAEALARRVAPVPVRLVDERLTTVSAQRLLRAAGVRAKDQRAVIDQAAAVVILQNWLDQCRAATPARADEPTTGSVAGEVIDG.

Positions M1–P23 are disordered.

The protein belongs to the YqgF nuclease family.

It is found in the cytoplasm. Its function is as follows. Could be a nuclease involved in processing of the 5'-end of pre-16S rRNA. The protein is Putative pre-16S rRNA nuclease of Mycobacterium leprae (strain Br4923).